The chain runs to 326 residues: ATPase GET3 (326 aa).

32–39 (KGGVGKTT) serves as a coordination point for ATP. Asp-61 is an active-site residue. ATP is bound by residues Glu-244 and Asn-271. Positions 282 and 285 each coordinate Zn(2+).

It belongs to the arsA ATPase family. Homodimer.

It localises to the cytoplasm. The protein localises to the endoplasmic reticulum. Functionally, ATPase required for the post-translational delivery of tail-anchored (TA) proteins to the endoplasmic reticulum. Recognizes and selectively binds the transmembrane domain of TA proteins in the cytosol. This complex then targets to the endoplasmic reticulum by membrane-bound receptors, where the tail-anchored protein is released for insertion. This process is regulated by ATP binding and hydrolysis. ATP binding drives the homodimer towards the closed dimer state, facilitating recognition of newly synthesized TA membrane proteins. ATP hydrolysis is required for insertion. Subsequently, the homodimer reverts towards the open dimer state, lowering its affinity for the membrane-bound receptor, and returning it to the cytosol to initiate a new round of targeting. The polypeptide is ATPase GET3 (Phaeosphaeria nodorum (strain SN15 / ATCC MYA-4574 / FGSC 10173) (Glume blotch fungus)).